We begin with the raw amino-acid sequence, 222 residues long: Mediator of RNA polymerase II transcription subunit 7 (222 aa).

The disordered stretch occupies residues 34-55 (YKEKKAASAKQTAPNNSNGGSE). Residues 42–53 (AKQTAPNNSNGG) show a composition bias toward polar residues.

It belongs to the Mediator complex subunit 7 family. Component of the Mediator complex, which is composed of at least 21 subunits that form three structurally distinct submodules. The Mediator head module contains MED6, MED8, MED11, SRB4/MED17, SRB5/MED18, ROX3/MED19, SRB2/MED20 and SRB6/MED22, the middle module contains MED1, MED4, NUT1/MED5, MED7, CSE2/MED9, NUT2/MED10, SRB7/MED21 and SOH1/MED31, and the tail module contains MED2, PGD1/MED3, RGR1/MED14, GAL11/MED15 and SIN4/MED16. The head and the middle modules interact directly with RNA polymerase II, whereas the elongated tail module interacts with gene-specific regulatory proteins. MED7 interacts directly with MED1, MED4 and SRB7/MED21.

It is found in the nucleus. In terms of biological role, component of the Mediator complex, a coactivator involved in the regulated transcription of nearly all RNA polymerase II-dependent genes. Mediator functions as a bridge to convey information from gene-specific regulatory proteins to the basal RNA polymerase II transcription machinery. The Mediator complex, having a compact conformation in its free form, is recruited to promoters by direct interactions with regulatory proteins and serves for the assembly of a functional preinitiation complex with RNA polymerase II and the general transcription factors. The Mediator complex unfolds to an extended conformation and partially surrounds RNA polymerase II, specifically interacting with the unphosphorylated form of the C-terminal domain (CTD) of RNA polymerase II. The Mediator complex dissociates from the RNA polymerase II holoenzyme and stays at the promoter when transcriptional elongation begins. The protein is Mediator of RNA polymerase II transcription subunit 7 (MED7) of Saccharomyces cerevisiae (strain ATCC 204508 / S288c) (Baker's yeast).